A 325-amino-acid chain; its full sequence is ATP phosphoribosyltransferase (325 aa).

This sequence belongs to the ATP phosphoribosyltransferase family. Long subfamily. Mg(2+) is required as a cofactor.

The protein localises to the cytoplasm. It catalyses the reaction 1-(5-phospho-beta-D-ribosyl)-ATP + diphosphate = 5-phospho-alpha-D-ribose 1-diphosphate + ATP. It functions in the pathway amino-acid biosynthesis; L-histidine biosynthesis; L-histidine from 5-phospho-alpha-D-ribose 1-diphosphate: step 1/9. Its activity is regulated as follows. Feedback inhibited by histidine. In terms of biological role, catalyzes the condensation of ATP and 5-phosphoribose 1-diphosphate to form N'-(5'-phosphoribosyl)-ATP (PR-ATP). Has a crucial role in the pathway because the rate of histidine biosynthesis seems to be controlled primarily by regulation of HisG enzymatic activity. This is ATP phosphoribosyltransferase from Rhodopseudomonas palustris (strain BisA53).